Here is a 299-residue protein sequence, read N- to C-terminus: Ribosomal protein L11 methyltransferase (299 aa).

Residues T139, G166, D188, and N231 each coordinate S-adenosyl-L-methionine.

It belongs to the methyltransferase superfamily. PrmA family.

The protein localises to the cytoplasm. It carries out the reaction L-lysyl-[protein] + 3 S-adenosyl-L-methionine = N(6),N(6),N(6)-trimethyl-L-lysyl-[protein] + 3 S-adenosyl-L-homocysteine + 3 H(+). Methylates ribosomal protein L11. This chain is Ribosomal protein L11 methyltransferase, found in Thermosynechococcus vestitus (strain NIES-2133 / IAM M-273 / BP-1).